The primary structure comprises 328 residues: MASRCSEPYPEVSRIPTVRGCNGSLSGALSCCEDSARGSGPPKAPTVAEGPSSCLRRNVISERERRKRMSLSCERLRALLPQFDGRREDMASVLEMSVQFLRLASALGPSQEQHAILASSKEMWHSLQEDVLQLTLSSQIQAGVPDPGTGASSGTRTPDVKAFLESPWSLDPASASPEPVPHILASSRQWDPASCTSLGTDKCEALLGLCQVRGGLPPFSEPSSLVPWPPGRSLPKAVRPPLSWPPFSQQQTLPVMSGEALGWLGQAGPLAMGAAPLGEPAKEDPMLAQEAGSALGSDVDDGTSFLLTAGPSSWPGEWGPGFRAGPPA.

The region spanning S53 to A104 is the bHLH domain. Residues E290–A328 are disordered. Over residues G310–G321 the composition is skewed to low complexity.

Forms both hetero- and homodimers with SOHLH2.

It localises to the cytoplasm. The protein resides in the nucleus. Functionally, transcription regulator of both male and female germline differentiation. Suppresses genes involved in spermatogonial stem cells maintenance, and induces genes important for spermatogonial differentiation. Coordinates oocyte differentiation without affecting meiosis I. The chain is Spermatogenesis- and oogenesis-specific basic helix-loop-helix-containing protein 1 (SOHLH1) from Homo sapiens (Human).